The primary structure comprises 497 residues: COP9 signalosome complex subunit 3 (497 aa).

One can recognise a PCI domain in the interval 233–408; that stretch reads QAFDAFERCV…DGSPAYLTFL (176 aa).

Belongs to the CSN3 family. Component of the COP9 signalosome (CSN) complex.

Its subcellular location is the cytoplasm. It is found in the nucleus. Its function is as follows. Component of the COP9 signalosome (CSN) complex that acts as an regulator of the ubiquitin (Ubl) conjugation pathway by mediating the deneddylation of the cullin subunit of SCF-type E3 ubiquitin-protein ligase complexes. The CSN complex is involved in the regulation of the circadian clock through its control of the stability of the SCF(FWD1) complex. This chain is COP9 signalosome complex subunit 3 (csn-3), found in Neurospora crassa (strain ATCC 24698 / 74-OR23-1A / CBS 708.71 / DSM 1257 / FGSC 987).